Reading from the N-terminus, the 116-residue chain is Large ribosomal subunit protein bL17 (116 aa).

Belongs to the bacterial ribosomal protein bL17 family. In terms of assembly, part of the 50S ribosomal subunit. Contacts protein L32.

The polypeptide is Large ribosomal subunit protein bL17 (Prochlorococcus marinus (strain MIT 9211)).